The chain runs to 248 residues: Probable transcriptional regulatory protein RPD_4171 (248 aa).

The interval M1 to S22 is disordered.

It belongs to the TACO1 family.

It localises to the cytoplasm. The chain is Probable transcriptional regulatory protein RPD_4171 from Rhodopseudomonas palustris (strain BisB5).